The sequence spans 197 residues: Holliday junction branch migration complex subunit RuvA (197 aa).

A domain I region spans residues 1–64 (MYEYIKGKYI…EDFIGIYGFL (64 aa)). The tract at residues 65–143 (TKDELSMFKL…IDISEEDDEQ (79 aa)) is domain II. Positions 144-148 (IINKV) are flexible linker. The interval 149–197 (TDDKKVLEAVAALVTLGYSEKEASKVINLCDKNNSLEQIIKEALKHLMK) is domain III.

The protein belongs to the RuvA family. As to quaternary structure, homotetramer. Forms an RuvA(8)-RuvB(12)-Holliday junction (HJ) complex. HJ DNA is sandwiched between 2 RuvA tetramers; dsDNA enters through RuvA and exits via RuvB. An RuvB hexamer assembles on each DNA strand where it exits the tetramer. Each RuvB hexamer is contacted by two RuvA subunits (via domain III) on 2 adjacent RuvB subunits; this complex drives branch migration. In the full resolvosome a probable DNA-RuvA(4)-RuvB(12)-RuvC(2) complex forms which resolves the HJ.

Its subcellular location is the cytoplasm. The RuvA-RuvB-RuvC complex processes Holliday junction (HJ) DNA during genetic recombination and DNA repair, while the RuvA-RuvB complex plays an important role in the rescue of blocked DNA replication forks via replication fork reversal (RFR). RuvA specifically binds to HJ cruciform DNA, conferring on it an open structure. The RuvB hexamer acts as an ATP-dependent pump, pulling dsDNA into and through the RuvAB complex. HJ branch migration allows RuvC to scan DNA until it finds its consensus sequence, where it cleaves and resolves the cruciform DNA. The protein is Holliday junction branch migration complex subunit RuvA of Clostridium botulinum (strain Loch Maree / Type A3).